The following is a 114-amino-acid chain: Large ribosomal subunit protein bL20 (114 aa).

Belongs to the bacterial ribosomal protein bL20 family.

Functionally, binds directly to 23S ribosomal RNA and is necessary for the in vitro assembly process of the 50S ribosomal subunit. It is not involved in the protein synthesizing functions of that subunit. The protein is Large ribosomal subunit protein bL20 of Anaeromyxobacter dehalogenans (strain 2CP-C).